Consider the following 203-residue polypeptide: Imidazoleglycerol-phosphate dehydratase (203 aa).

The protein belongs to the imidazoleglycerol-phosphate dehydratase family.

The protein resides in the cytoplasm. The catalysed reaction is D-erythro-1-(imidazol-4-yl)glycerol 3-phosphate = 3-(imidazol-4-yl)-2-oxopropyl phosphate + H2O. It functions in the pathway amino-acid biosynthesis; L-histidine biosynthesis; L-histidine from 5-phospho-alpha-D-ribose 1-diphosphate: step 6/9. The polypeptide is Imidazoleglycerol-phosphate dehydratase (Parvibaculum lavamentivorans (strain DS-1 / DSM 13023 / NCIMB 13966)).